A 539-amino-acid chain; its full sequence is O-phosphoserine--tRNA(Cys) ligase (539 aa).

Substrate contacts are provided by residues 188 to 190, 233 to 235, 275 to 276, and Asn319; these read HMT, SAS, and YY.

The protein belongs to the class-II aminoacyl-tRNA synthetase family. O-phosphoseryl-tRNA(Cys) synthetase subfamily. In terms of assembly, homotetramer. Interacts with SepCysS.

It carries out the reaction tRNA(Cys) + O-phospho-L-serine + ATP = O-phospho-L-seryl-tRNA(Cys) + AMP + diphosphate. Catalyzes the attachment of O-phosphoserine (Sep) to tRNA(Cys). In Methanocaldococcus jannaschii (strain ATCC 43067 / DSM 2661 / JAL-1 / JCM 10045 / NBRC 100440) (Methanococcus jannaschii), this protein is O-phosphoserine--tRNA(Cys) ligase (sepS).